The sequence spans 140 residues: uncharacterized protein (140 aa).

The N-terminal stretch at 1–22 (MRLRWQTIVLLLLILGGASASA) is a signal peptide.

This is an uncharacterized protein from Archaeoglobus fulgidus (strain ATCC 49558 / DSM 4304 / JCM 9628 / NBRC 100126 / VC-16).